A 425-amino-acid polypeptide reads, in one-letter code: Kynureninase (425 aa).

Pyridoxal 5'-phosphate contacts are provided by residues leucine 105, threonine 106, 133 to 136, aspartate 218, histidine 221, and tyrosine 243; that span reads FPSD. Lysine 244 carries the post-translational modification N6-(pyridoxal phosphate)lysine. Positions 274 and 302 each coordinate pyridoxal 5'-phosphate.

This sequence belongs to the kynureninase family. As to quaternary structure, homodimer. Pyridoxal 5'-phosphate serves as cofactor.

The catalysed reaction is L-kynurenine + H2O = anthranilate + L-alanine + H(+). The enzyme catalyses 3-hydroxy-L-kynurenine + H2O = 3-hydroxyanthranilate + L-alanine + H(+). It functions in the pathway amino-acid degradation; L-kynurenine degradation; L-alanine and anthranilate from L-kynurenine: step 1/1. Its pathway is cofactor biosynthesis; NAD(+) biosynthesis; quinolinate from L-kynurenine: step 2/3. Its function is as follows. Catalyzes the cleavage of L-kynurenine (L-Kyn) and L-3-hydroxykynurenine (L-3OHKyn) into anthranilic acid (AA) and 3-hydroxyanthranilic acid (3-OHAA), respectively. This Christiangramia forsetii (strain DSM 17595 / CGMCC 1.15422 / KT0803) (Gramella forsetii) protein is Kynureninase.